The sequence spans 463 residues: Glucagon-like peptide 1 receptor (463 aa).

An N-terminal signal peptide occupies residues 1 to 21 (MAVTPSLLRLALLLLGAVGRA). Over 22-139 (GPRPQGATVS…KQGERNSPEE (118 aa)) the chain is Extracellular. 3 disulfide bridges follow: cysteine 46-cysteine 71, cysteine 62-cysteine 104, and cysteine 85-cysteine 126. N-linked (GlcNAc...) asparagine glycosylation is found at asparagine 63, asparagine 82, and asparagine 115. A helical membrane pass occupies residues 140 to 164 (QLLSLYIIYTVGYALSFSALVIASA). The Cytoplasmic segment spans residues 165-175 (ILVSFRHLHCT). A helical transmembrane segment spans residues 176 to 201 (RNYIHLNLFASFILRALSVFIKDAAL). Topologically, residues 202–227 (KWMYSTAAQQHQWDGLLSYQDSLGCR) are extracellular. A disulfide bridge links cysteine 226 with cysteine 296. Residues 228-251 (LVFLLMQYCVAANYYWLLVEGVYL) traverse the membrane as a helical segment. At 252–265 (YTLLAFSVFSEQRI) the chain is on the cytoplasmic side. The chain crosses the membrane as a helical span at residues 266 to 290 (FKLYLSIGWGVPLLFVIPWGIVKYL). Topologically, residues 291-305 (YEDEGCWTRNSNMNY) are extracellular. A helical transmembrane segment spans residues 306–328 (WLIIRLPILFAIGVNFLVFIRVI). The Cytoplasmic portion of the chain corresponds to 329–348 (CIVIAKLKANLMCKTDIKCR). Cysteine 341 carries the ADP-ribosylcysteine modification. ADP-ribosylarginine is present on arginine 348. A helical membrane pass occupies residues 349 to 370 (LAKSTLTLIPLLGTHEVIFAFV). Residues 352-355 (STLT) form an important for allosteric inhibitor binding region. Residues 371-383 (MDEHARGTLRFVK) are Extracellular-facing. A helical transmembrane segment spans residues 384 to 404 (LFTELSFTSFQGFMVAVLYCF). Topologically, residues 405–463 (VNNEVQMEFRKSWERWRLERLNIQRDSSMKPLKCPTSSVSSGATVGSSVYAATCQNSCS) are cytoplasmic.

It belongs to the G-protein coupled receptor 2 family. As to quaternary structure, may form homodimers and heterodimers with GIPR. Post-translationally, N-glycosylation enhances cell surface expression and lengthens receptor half-life by preventing degradation in the ER. In terms of tissue distribution, pancreatic islets, stomach, lung, rat insulinoma cell line.

It is found in the cell membrane. Functionally, G-protein coupled receptor for glucagon-like peptide 1 (GLP-1). Ligand binding triggers activation of a signaling cascade that leads to the activation of adenylyl cyclase and increased intracellular cAMP levels. Plays a role in regulating insulin secretion in response to GLP-1. This is Glucagon-like peptide 1 receptor (Glp1r) from Rattus norvegicus (Rat).